We begin with the raw amino-acid sequence, 503 residues long: Glycerol kinase (503 aa).

An ADP-binding site is contributed by threonine 14. 3 residues coordinate ATP: threonine 14, threonine 15, and serine 16. Threonine 14 lines the sn-glycerol 3-phosphate pocket. Arginine 18 contacts ADP. The sn-glycerol 3-phosphate site is built by arginine 84, glutamate 85, tyrosine 136, and aspartate 246. Glycerol contacts are provided by arginine 84, glutamate 85, tyrosine 136, aspartate 246, and glutamine 247. Residues threonine 268 and glycine 311 each coordinate ADP. Threonine 268, glycine 311, glutamine 315, and glycine 412 together coordinate ATP. 2 residues coordinate ADP: glycine 412 and asparagine 416. Over residues 468 to 481 (ERTFSPDSDNEKRE) the composition is skewed to basic and acidic residues. The tract at residues 468-489 (ERTFSPDSDNEKRERRYKGWKK) is disordered.

The protein belongs to the FGGY kinase family.

It catalyses the reaction glycerol + ATP = sn-glycerol 3-phosphate + ADP + H(+). The protein operates within polyol metabolism; glycerol degradation via glycerol kinase pathway; sn-glycerol 3-phosphate from glycerol: step 1/1. Its activity is regulated as follows. Inhibited by fructose 1,6-bisphosphate (FBP). Key enzyme in the regulation of glycerol uptake and metabolism. Catalyzes the phosphorylation of glycerol to yield sn-glycerol 3-phosphate. This chain is Glycerol kinase, found in Haemophilus influenzae (strain ATCC 51907 / DSM 11121 / KW20 / Rd).